A 317-amino-acid polypeptide reads, in one-letter code: Beta-ketoacyl-[acyl-carrier-protein] synthase III (317 aa).

Active-site residues include C112 and H244. The interval 245 to 249 (QANLR) is ACP-binding. Residue N274 is part of the active site.

Belongs to the thiolase-like superfamily. FabH family. In terms of assembly, homodimer.

The protein resides in the cytoplasm. The enzyme catalyses malonyl-[ACP] + acetyl-CoA + H(+) = 3-oxobutanoyl-[ACP] + CO2 + CoA. Its pathway is lipid metabolism; fatty acid biosynthesis. Functionally, catalyzes the condensation reaction of fatty acid synthesis by the addition to an acyl acceptor of two carbons from malonyl-ACP. Catalyzes the first condensation reaction which initiates fatty acid synthesis and may therefore play a role in governing the total rate of fatty acid production. Possesses both acetoacetyl-ACP synthase and acetyl transacylase activities. Its substrate specificity determines the biosynthesis of branched-chain and/or straight-chain of fatty acids. The chain is Beta-ketoacyl-[acyl-carrier-protein] synthase III from Salmonella typhi.